We begin with the raw amino-acid sequence, 485 residues long: Cysteine protease atg4da (485 aa).

The interval alanine 22 to proline 46 is disordered. The active-site Nucleophile is cysteine 131. Catalysis depends on residues aspartate 368 and histidine 370.

This sequence belongs to the peptidase C54 family.

Its subcellular location is the cytoplasm. The enzyme catalyses [protein]-C-terminal L-amino acid-glycyl-phosphatidylethanolamide + H2O = [protein]-C-terminal L-amino acid-glycine + a 1,2-diacyl-sn-glycero-3-phosphoethanolamine. It carries out the reaction [protein]-C-terminal L-amino acid-glycyl-phosphatidylserine + H2O = [protein]-C-terminal L-amino acid-glycine + a 1,2-diacyl-sn-glycero-3-phospho-L-serine. In terms of biological role, cysteine protease that plays a key role in autophagy by mediating both proteolytic activation and delipidation of ATG8 family proteins. The protease activity is required for proteolytic activation of ATG8 family proteins to reveal a C-terminal glycine. Exposure of the glycine at the C-terminus is essential for ATG8 proteins conjugation to phosphatidylethanolamine (PE) and insertion to membranes, which is necessary for autophagy. In addition to the protease activity, also mediates delipidation of ATG8 family proteins. Catalyzes delipidation of PE-conjugated forms of ATG8 proteins during macroautophagy. Also involved in non-canonical autophagy, a parallel pathway involving conjugation of ATG8 proteins to single membranes at endolysosomal compartments, by catalyzing delipidation of ATG8 proteins conjugated to phosphatidylserine (PS). ATG4D plays a role in the autophagy-mediated neuronal homeostasis in the central nervous system. The sequence is that of Cysteine protease atg4da from Danio rerio (Zebrafish).